A 649-amino-acid chain; its full sequence is Drebrin (649 aa).

Ala2 carries the post-translational modification N-acetylalanine. One can recognise an ADF-H domain in the interval 3–134; it reads GVSFSGHRLE…DAGAIGQRLS (132 aa). Ser141 and Ser142 each carry phosphoserine. 2 stretches are compositionally biased toward basic and acidic residues: residues 208-236 and 288-298; these read QERM…EEHR and DNPREFFKQQE. 3 disordered regions span residues 208–420, 477–502, and 538–620; these read QERM…PAED, DLWP…PSGT, and EPPA…PPPV. A phosphothreonine mark is found at Thr331 and Thr335. A compositionally biased stretch (polar residues) spans 334–348; that stretch reads PTRSPSDSSTASTPV. Ser337, Ser339, and Ser345 each carry phosphoserine. The residue at position 346 (Thr346) is a Phosphothreonine. Residues 363 to 374 show a composition bias toward pro residues; that stretch reads QPPPLPPPPPPA. Position 416 is a phosphoserine (Ser416). Position 497 is a phosphothreonine (Thr497). Residues 582 to 594 show a composition bias toward polar residues; the sequence is NGETTQKEGTQAS. At Ser601 the chain carries Phosphoserine.

Interacts with RUFY3. Interacts with CXCR4; this interaction is enhanced by antigenic stimulation. Interacts (via ADF-H domain) with ZMYND8 (via N-terminus); the interaction leads to sequestering of ZMYND8 in the cytoplasm. As to expression, expressed in the brain, with expression in the molecular layer of the dentate gyrus, stratum pyramidale, and stratum radiatum of the hippocampus (at protein level). Also expressed in the terminal varicosities distributed along dendritic trees of pyramidal cells in CA4 and CA3 of the hippocampus (at protein level). Expressed in pyramidal cells in CA2, CA1 and the subiculum of the hippocampus (at protein level). Expressed in peripheral blood lymphocytes, including T-cells (at protein level). Expressed in the brain. Expressed in the heart, placenta, lung, skeletal muscle, kidney, pancreas, skin fibroblasts, gingival fibroblasts and bone-derived cells.

The protein resides in the cytoplasm. It is found in the cell projection. Its subcellular location is the dendrite. The protein localises to the cell cortex. It localises to the cell junction. The protein resides in the growth cone. Functionally, actin cytoskeleton-organizing protein that plays a role in the formation of cell projections. Required for actin polymerization at immunological synapses (IS) and for the recruitment of the chemokine receptor CXCR4 to IS. Plays a role in dendritic spine morphogenesis and organization, including the localization of the dopamine receptor DRD1 to the dendritic spines. Involved in memory-related synaptic plasticity in the hippocampus. This Homo sapiens (Human) protein is Drebrin (DBN1).